We begin with the raw amino-acid sequence, 953 residues long: Translation initiation factor IF-2 (953 aa).

Disordered stretches follow at residues 52–241 (KASK…QQEA) and 279–363 (TKLK…TERK). 3 stretches are compositionally biased toward basic and acidic residues: residues 80–89 (TGSEHVEKTQ), 98–111 (FKAE…EQAA), and 140–188 (QGDK…ENHK). Polar residues predominate over residues 191–207 (RFTNQKKQGRQEPQSKS). Basic and acidic residues predominate over residues 229–241 (RQSETRFRAQQEA). Residues 282 to 291 (KSSNISAKST) show a composition bias toward polar residues. The segment covering 300–317 (ARPEKNRELTHHSQEGQK) has biased composition (basic and acidic residues). A compositionally biased stretch (low complexity) spans 322–338 (SWNSQNQVRNQKNSNWN). Over residues 339–348 (KNKKTKKGKN) the composition is skewed to basic residues. Residues 454–623 (ERAPVVTIMG…LLVAEVEELK (170 aa)) enclose the tr-type G domain. A G1 region spans residues 463 to 470 (GHVDHGKT). 463–470 (GHVDHGKT) is a GTP binding site. The segment at 488–492 (GITQH) is G2. The interval 509 to 512 (DTPG) is G3. GTP is bound by residues 509-513 (DTPGH) and 563-566 (NKID). The G4 stretch occupies residues 563–566 (NKID). The tract at residues 599-601 (SAK) is G5.

Belongs to the TRAFAC class translation factor GTPase superfamily. Classic translation factor GTPase family. IF-2 subfamily.

The protein resides in the cytoplasm. One of the essential components for the initiation of protein synthesis. Protects formylmethionyl-tRNA from spontaneous hydrolysis and promotes its binding to the 30S ribosomal subunits. Also involved in the hydrolysis of GTP during the formation of the 70S ribosomal complex. The polypeptide is Translation initiation factor IF-2 (Streptococcus pyogenes serotype M4 (strain MGAS10750)).